The following is a 571-amino-acid chain: Cilia- and flagella-associated protein 52 (571 aa).

WD repeat units follow at residues Gly62 to Arg106, Leu109 to Gly150, Leu156 to Trp195, Gln288 to Ile327, Cys330 to Asn364, Ala366 to Glu405, Glu410 to Met449, Leu451 to Glu490, Ser494 to Val533, and Gly536 to Ser571.

Belongs to the CFAP52 family. As to quaternary structure, microtubule inner protein component of sperm flagellar doublet microtubules. Interacts with BRCA2. Interacts with the CCT chaperonin complex. Interacts with HSP70. Interacts with AK8. Interacts with CFAP45. Interacts with DNAI1. Interacts with IQDC.

The protein localises to the cytoplasm. It is found in the cytoskeleton. Its subcellular location is the cilium axoneme. The protein resides in the flagellum axoneme. Microtubule inner protein (MIP) part of the dynein-decorated doublet microtubules (DMTs) in cilia axoneme. Important for proper ciliary and flagellar beating. May act in cooperation with CFAP45 and axonemal dynein subunit DNAH11. May play a role in cell growth and/or survival. The polypeptide is Cilia- and flagella-associated protein 52 (Macaca fascicularis (Crab-eating macaque)).